Reading from the N-terminus, the 201-residue chain is Ribonuclease HII (201 aa).

Residues 10–200 enclose the RNase H type-2 domain; sequence LIEAGCDEAG…LGTDPQLEIP (191 aa). The a divalent metal cation site is built by aspartate 16, glutamate 17, and aspartate 108.

The protein belongs to the RNase HII family. Mn(2+) serves as cofactor. It depends on Mg(2+) as a cofactor.

The protein localises to the cytoplasm. The enzyme catalyses Endonucleolytic cleavage to 5'-phosphomonoester.. Functionally, endonuclease that specifically degrades the RNA of RNA-DNA hybrids. In Phocaeicola vulgatus (strain ATCC 8482 / DSM 1447 / JCM 5826 / CCUG 4940 / NBRC 14291 / NCTC 11154) (Bacteroides vulgatus), this protein is Ribonuclease HII.